The following is a 305-amino-acid chain: tRNA pseudouridine synthase B (305 aa).

D39 functions as the Nucleophile in the catalytic mechanism.

The protein belongs to the pseudouridine synthase TruB family. Type 1 subfamily.

It carries out the reaction uridine(55) in tRNA = pseudouridine(55) in tRNA. Responsible for synthesis of pseudouridine from uracil-55 in the psi GC loop of transfer RNAs. This is tRNA pseudouridine synthase B from Staphylococcus aureus (strain Mu50 / ATCC 700699).